The following is a 57-amino-acid chain: Probable antitoxin MazE1 (57 aa).

In terms of assembly, forms a complex with cognate toxin MazF1.

Its function is as follows. Antitoxin component of a type II toxin-antitoxin (TA) system. The chain is Probable antitoxin MazE1 (mazE1) from Mycobacterium tuberculosis (strain ATCC 25618 / H37Rv).